A 140-amino-acid chain; its full sequence is Large ribosomal subunit protein uL11 (140 aa).

Belongs to the universal ribosomal protein uL11 family. In terms of assembly, part of the ribosomal stalk of the 50S ribosomal subunit. Interacts with L10 and the large rRNA to form the base of the stalk. L10 forms an elongated spine to which L12 dimers bind in a sequential fashion forming a multimeric L10(L12)X complex. In terms of processing, one or more lysine residues are methylated.

Functionally, forms part of the ribosomal stalk which helps the ribosome interact with GTP-bound translation factors. The chain is Large ribosomal subunit protein uL11 from Nitratidesulfovibrio vulgaris (strain ATCC 29579 / DSM 644 / CCUG 34227 / NCIMB 8303 / VKM B-1760 / Hildenborough) (Desulfovibrio vulgaris).